Reading from the N-terminus, the 506-residue chain is ATP synthase subunit alpha (506 aa).

Position 170-177 (170-177) interacts with ATP; that stretch reads GDRQTGKT.

It belongs to the ATPase alpha/beta chains family. As to quaternary structure, F-type ATPases have 2 components, CF(1) - the catalytic core - and CF(0) - the membrane proton channel. CF(1) has five subunits: alpha(3), beta(3), gamma(1), delta(1), epsilon(1). CF(0) has four main subunits: a(1), b(1), b'(1) and c(9-12).

It is found in the cellular thylakoid membrane. The enzyme catalyses ATP + H2O + 4 H(+)(in) = ADP + phosphate + 5 H(+)(out). Produces ATP from ADP in the presence of a proton gradient across the membrane. The alpha chain is a regulatory subunit. The chain is ATP synthase subunit alpha from Synechococcus sp. (strain WH7803).